A 393-amino-acid chain; its full sequence is Methylthioribose kinase (393 aa).

ATP contacts are provided by residues Asn38, Lys53, and 107 to 109 (EDL). Substrate is bound at residue Asp225. 242–244 (DPE) is an ATP binding site. Arg332 contacts substrate.

Belongs to the methylthioribose kinase family. Homodimer.

It carries out the reaction 5-(methylsulfanyl)-D-ribose + ATP = 5-(methylsulfanyl)-alpha-D-ribose 1-phosphate + ADP + H(+). It participates in amino-acid biosynthesis; L-methionine biosynthesis via salvage pathway; S-methyl-5-thio-alpha-D-ribose 1-phosphate from S-methyl-5'-thioadenosine (hydrolase route): step 2/2. Catalyzes the phosphorylation of methylthioribose into methylthioribose-1-phosphate. In Bacillus cereus (strain ATCC 14579 / DSM 31 / CCUG 7414 / JCM 2152 / NBRC 15305 / NCIMB 9373 / NCTC 2599 / NRRL B-3711), this protein is Methylthioribose kinase.